Here is a 114-residue protein sequence, read N- to C-terminus: Large ribosomal subunit protein bL20c (114 aa).

It belongs to the bacterial ribosomal protein bL20 family.

The protein resides in the plastid. It localises to the chloroplast. Binds directly to 23S ribosomal RNA and is necessary for the in vitro assembly process of the 50S ribosomal subunit. It is not involved in the protein synthesizing functions of that subunit. The protein is Large ribosomal subunit protein bL20c of Psilotum nudum (Whisk fern).